A 488-amino-acid polypeptide reads, in one-letter code: GTPase Der (488 aa).

EngA-type G domains lie at 3–166 (PVVA…AEAM) and 199–372 (IKLA…DSAT). GTP contacts are provided by residues 9-16 (GRPNVGKS), 56-60 (DTGGI), 118-121 (NKVD), 205-212 (GKPNVGKS), 252-256 (DTAGV), and 317-320 (NKWD). A KH-like domain is found at 373–457 (RRVSTSMLTR…PIQLRFQEGD (85 aa)). The disordered stretch occupies residues 460 to 488 (FENKTEKLTMSQERRRKRAQSHIKDRKTK). Residues 473 to 488 (RRRKRAQSHIKDRKTK) are compositionally biased toward basic residues.

The protein belongs to the TRAFAC class TrmE-Era-EngA-EngB-Septin-like GTPase superfamily. EngA (Der) GTPase family. In terms of assembly, associates with the 50S ribosomal subunit.

Functionally, GTPase that plays an essential role in the late steps of ribosome biogenesis. This Shewanella baltica (strain OS223) protein is GTPase Der.